The following is a 153-amino-acid chain: UPF0178 protein MXAN_5526 (153 aa).

It belongs to the UPF0178 family.

This chain is UPF0178 protein MXAN_5526, found in Myxococcus xanthus (strain DK1622).